The sequence spans 166 residues: CDP-archaeol synthase (166 aa).

The next 4 helical transmembrane spans lie at 42-62 (FFGGVVSGVLVGLIEIWAATA), 73-93 (FLSVTLLATGALLGDLAKSFL), 104-124 (SWFLADQYDLVVGSFLLILIF), and 128-148 (WLFGTITLPIAVWIVVMTPLL).

This sequence belongs to the CDP-archaeol synthase family. The cofactor is Mg(2+).

The protein localises to the cell membrane. It carries out the reaction 2,3-bis-O-(geranylgeranyl)-sn-glycerol 1-phosphate + CTP + H(+) = CDP-2,3-bis-O-(geranylgeranyl)-sn-glycerol + diphosphate. It functions in the pathway membrane lipid metabolism; glycerophospholipid metabolism. Catalyzes the formation of CDP-2,3-bis-(O-geranylgeranyl)-sn-glycerol (CDP-archaeol) from 2,3-bis-(O-geranylgeranyl)-sn-glycerol 1-phosphate (DGGGP) and CTP. This reaction is the third ether-bond-formation step in the biosynthesis of archaeal membrane lipids. The sequence is that of CDP-archaeol synthase from Methanoculleus marisnigri (strain ATCC 35101 / DSM 1498 / JR1).